An 89-amino-acid polypeptide reads, in one-letter code: Small ribosomal subunit protein uS15 (89 aa).

The protein belongs to the universal ribosomal protein uS15 family. As to quaternary structure, part of the 30S ribosomal subunit. Forms a bridge to the 50S subunit in the 70S ribosome, contacting the 23S rRNA.

Its function is as follows. One of the primary rRNA binding proteins, it binds directly to 16S rRNA where it helps nucleate assembly of the platform of the 30S subunit by binding and bridging several RNA helices of the 16S rRNA. In terms of biological role, forms an intersubunit bridge (bridge B4) with the 23S rRNA of the 50S subunit in the ribosome. This Yersinia enterocolitica serotype O:8 / biotype 1B (strain NCTC 13174 / 8081) protein is Small ribosomal subunit protein uS15.